Reading from the N-terminus, the 479-residue chain is Galactosylgalactosylxylosylprotein 3-beta-glucuronosyltransferase P (479 aa).

Topologically, residues 1–34 (MKGGNYTSLGTCSGINVSGNVAGTRKMSLGKSIK) are cytoplasmic. Residues 35-50 (MYLTIFILTTCIYMAL) form a helical; Signal-anchor for type II membrane protein membrane-spanning segment. Topologically, residues 51-479 (YQYHISREPF…EHIDRLLVRP (429 aa)) are lumenal. N-linked (GlcNAc...) asparagine glycosylation is found at asparagine 90, asparagine 97, asparagine 98, and asparagine 271. The segment covering 94-120 (NTNNNSTTTSTTTTTAPTTPTTTTTTT) has biased composition (low complexity). Residues 94-122 (NTNNNSTTTSTTTTTAPTTPTTTTTTTVG) are disordered. Aspartate 335 contacts Mn(2+). Glutamate 418 (proton acceptor) is an active-site residue. N-linked (GlcNAc...) asparagine glycosylation is present at asparagine 460.

This sequence belongs to the glycosyltransferase 43 family. Requires Mn(2+) as cofactor.

It is found in the golgi apparatus membrane. It catalyses the reaction 3-O-(beta-D-galactosyl-(1-&gt;3)-beta-D-galactosyl-(1-&gt;4)-beta-D-xylosyl)-L-seryl-[protein] + UDP-alpha-D-glucuronate = 3-O-(beta-D-GlcA-(1-&gt;3)-beta-D-Gal-(1-&gt;3)-beta-D-Gal-(1-&gt;4)-beta-D-Xyl)-L-seryl-[protein] + UDP + H(+). It functions in the pathway protein modification; protein glycosylation. Its function is as follows. Involved in the biosynthesis of L2/HNK-1 carbohydrate epitope on both glycolipids and glycoproteins. Enzyme has a broad specificity. The polypeptide is Galactosylgalactosylxylosylprotein 3-beta-glucuronosyltransferase P (GlcAT-P) (Drosophila melanogaster (Fruit fly)).